The following is a 217-amino-acid chain: Vesicle transport through interaction with t-SNAREs homolog 1A (217 aa).

The Cytoplasmic segment spans residues 1–192 (MSSDFEGYEQ…GMLRRIIQNR (192 aa)). Coiled coils occupy residues 31–92 (PDEK…KRSR) and 112–178 (ENQR…GKSS). Residues 193–213 (ILLVILGIIVVITILMAITFS) traverse the membrane as a helical segment. The Extracellular portion of the chain corresponds to 214-217 (VRRH).

The protein belongs to the VTI1 family. In terms of assembly, interacts with distinct SNARE complexes that contain either STX5 or STX6. Interacts with NAPA and, to a lesser extent, with NAPG. Identified in a complex containing STX6, STX12, VAMP4 and VTI1A.

The protein resides in the cytoplasmic vesicle. It is found in the golgi apparatus membrane. Its function is as follows. V-SNARE that mediates vesicle transport pathways through interactions with t-SNAREs on the target membrane. These interactions are proposed to mediate aspects of the specificity of vesicle trafficking and to promote fusion of the lipid bilayers. Involved in vesicular transport from the late endosomes to the trans-Golgi network. Along with VAMP7, involved in an non-conventional RAB1-dependent traffic route to the cell surface used by KCNIP1 and KCND2. May be involved in increased cytokine secretion associated with cellular senescence. The chain is Vesicle transport through interaction with t-SNAREs homolog 1A (VTI1A) from Homo sapiens (Human).